The chain runs to 534 residues: BEN domain-containing protein 4 (534 aa).

Disordered stretches follow at residues 1–24 (MEEEMQPAEEGPSVPKIYKQRSPY), 48–128 (ELPH…AASS), and 287–322 (VHTLGGWTSPATSESHGHPSSSTLPEEEEEEDEEGY). The span at 53–63 (RAPPPPPPPFA) shows a compositional bias: pro residues. Positions 69–83 (SISSSEPPPQQFQAQ) are enriched in polar residues. The span at 91-109 (GRAAAAASSSSPSCTPATS) shows a compositional bias: low complexity. Over residues 295-310 (SPATSESHGHPSSSTL) the composition is skewed to polar residues. Acidic residues predominate over residues 311–321 (PEEEEEEDEEG). A coiled-coil region spans residues 324–351 (PRCQELEQEVISLQQENEELRRKLESIP). The region spanning 390-498 (NYPVYITSKQ…DAVGHARQGR (109 aa)) is the BEN domain.

The protein is BEN domain-containing protein 4 (BEND4) of Homo sapiens (Human).